The following is a 484-amino-acid chain: MPSLEAVEAFLVMNESELLQDFLVGLIAAPQLAVFFEKYPRLRKIIDREWPGWQRRLRKRIHDTNVPDDLAQEFTLYQHQLLLGSGEFFRRLPATLAALDSQGSPFSHKAHQLCPDGKITHSDSFHTLFLQQWRLSLVARTLTLHHQVMEQEREMLQQELQQRMQLSGALEPVLVENENAAGRLWDMSRAPTHHGDYQLLVQYGDFLAGQPELLQLAERLGRSRAADPQDHADTQLEIRRVLVREPAVMPEEVSGIHQSDEILRLMPSELSLLGLSELELEFYRRLLEKRLMTYRLQGDAWREQQIQHRVTYRHHQQQPKGPFIVCVDTSGSMGGFHEQCAKAFCLALMRIALADNRRCYIMLFSTAIVQYELTADSGIDQAIRFLSQRFRGGTDLARCLAQTCTLLQQPTWQQADAVVISDFIAQRLPEETQGLINQLQKQDGHCFHAVAMSPHGKPSIMKVFDYIWRFDSGIKGRLLRRWRH.

This sequence belongs to the ViaA family. As to quaternary structure, homodimer. Interacts with RavA.

Its subcellular location is the cytoplasm. Functionally, component of the RavA-ViaA chaperone complex, which may act on the membrane to optimize the function of some of the respiratory chains. ViaA stimulates the ATPase activity of RavA. In Edwardsiella ictaluri (strain 93-146), this protein is Regulatory protein ViaA.